Reading from the N-terminus, the 252-residue chain is Endonuclease NucS (252 aa).

The protein belongs to the NucS endonuclease family.

Its subcellular location is the cytoplasm. In terms of biological role, cleaves both 3' and 5' ssDNA extremities of branched DNA structures. In Sulfurisphaera tokodaii (strain DSM 16993 / JCM 10545 / NBRC 100140 / 7) (Sulfolobus tokodaii), this protein is Endonuclease NucS.